Here is a 250-residue protein sequence, read N- to C-terminus: 1-(5-phosphoribosyl)-5-[(5-phosphoribosylamino)methylideneamino] imidazole-4-carboxamide isomerase (250 aa).

D12 (proton acceptor) is an active-site residue. D134 (proton donor) is an active-site residue.

Belongs to the HisA/HisF family.

The protein localises to the cytoplasm. It carries out the reaction 1-(5-phospho-beta-D-ribosyl)-5-[(5-phospho-beta-D-ribosylamino)methylideneamino]imidazole-4-carboxamide = 5-[(5-phospho-1-deoxy-D-ribulos-1-ylimino)methylamino]-1-(5-phospho-beta-D-ribosyl)imidazole-4-carboxamide. It functions in the pathway amino-acid biosynthesis; L-histidine biosynthesis; L-histidine from 5-phospho-alpha-D-ribose 1-diphosphate: step 4/9. The polypeptide is 1-(5-phosphoribosyl)-5-[(5-phosphoribosylamino)methylideneamino] imidazole-4-carboxamide isomerase (Actinobacillus pleuropneumoniae serotype 5b (strain L20)).